Reading from the N-terminus, the 351-residue chain is Basic salivary proline-rich protein 3 (351 aa).

A signal peptide spans Met1–Ala16. At Gln17 the chain carries Pyrrolidone carboxylic acid. A disordered region spans residues Gln17–Gln351. Residues Asn20–Val31 show a composition bias toward polar residues. Ser24 is subject to Phosphoserine. A run of 12 repeats spans residues Pro53 to Pro73, Arg74 to Pro94, Arg95 to Pro115, Arg116 to Pro136, Arg137 to Pro157, Arg158 to Pro178, His179 to Pro199, Arg200 to Pro220, Arg221 to Pro241, Arg242 to Pro261, Arg263 to Pro283, and His284 to Pro304. The interval Pro53–Pro304 is 12 X 21 AA tandem repeats of [RHP]-P-G-K-P-[EQ]-G-[PQS]-P-[PS]-Q-[GE]-G-N-[QK]-[SP]-[QR]-[GR]-P-P-P. Asn66 carries N-linked (GlcNAc...) asparagine glycosylation. Residues Gly70–Gln84 show a composition bias toward pro residues. N-linked (GlcNAc...) asparagine glycosylation occurs at Asn87. Ser89 carries O-linked (Hex) serine glycosylation. Low complexity predominate over residues Pro99–Gln111. Residue Asn108 is glycosylated (N-linked (GlcNAc...) asparagine). Over residues Gly112–Gln126 the composition is skewed to pro residues. Asn129 is a glycosylation site (N-linked (GlcNAc...) asparagine). Over residues Gly133–Gln147 the composition is skewed to pro residues. An N-linked (GlcNAc...) asparagine glycan is attached at Asn150. Pro residues-rich tracts occupy residues Gly154–Gln168 and Gly175–Gln189. An N-linked (GlcNAc...) asparagine glycan is attached at Asn192. Pro residues predominate over residues Gly196 to Gln210. Residues Asn213 and Asn234 are each glycosylated (N-linked (GlcNAc...) asparagine). 3 stretches are compositionally biased toward pro residues: residues Gly217–Gln252, Gly259–Pro270, and Gln279–Gln351. An N-linked (Hex) asparagine; atypical glycan is attached at Asn297.

N- and O-glycosylated; contains about 50% carbohydrate. This is composed of highly fucosylated N-linked saccharides, the major structure is a biantennary asialosaccharide containing 2 fucose residues on one antenna and an unsubstituted terminal lactosamine sequence on the other. The Gram-negative bacterium F.nucleatum binds to carbohydrates containing unsubstituted GalBeta1,4GlcNAc residues. N-glycosylation on Asn-87 is prevalent in head and neck cancer patients. Post-translationally, proteolytically cleaved at the tripeptide Xaa-Pro-Gln, where Xaa in the P(3) position is mostly lysine. The endoprotease may be of microbial origin. Besides on the N-terminal of mature PRB3, pyroglutamate formation found on at least Gln-67, Gln-88, Gln-256 and Gln-337.

The protein resides in the secreted. Functionally, acts as a receptor for the Gram-negative bacterium F.nucleatum. In Homo sapiens (Human), this protein is Basic salivary proline-rich protein 3 (PRB3).